The chain runs to 251 residues: Zwei Ig domain protein zig-3 (251 aa).

The signal sequence occupies residues 1 to 19; the sequence is MLLICISVLAAISAHPLSS. Ig-like C2-type domains lie at 42-144 and 160-244; these read PSLK…AKIS and PVIT…TFLY. Cystine bridges form between Cys65/Cys128 and Cys181/Cys228.

In terms of tissue distribution, expressed in PVT, AIM and ASI neurons, in vulva and weakly in body wall muscles.

It is found in the secreted. Functionally, required for maintaining axon position of PVQ and PVP neurons postembryonically in the ventral nerve cord (VNC) by preventing axons drifting into the opposite side of the VNC that could occur during body growth and movement. The protein is Zwei Ig domain protein zig-3 of Caenorhabditis elegans.